A 270-amino-acid chain; its full sequence is Karrikin insensitive 2 receptor CA (270 aa).

The active-site Nucleophile is the S95. Catalysis depends on residues D217 and H246.

The protein belongs to the AB hydrolase superfamily. Expressed in stigma.

The protein resides in the nucleus. The protein localises to the cytoplasm. Functionally, hydrolase which may be involved in plant olfaction during volatile communication. In Petunia hybrida (Petunia), this protein is Karrikin insensitive 2 receptor CA.